The following is a 433-amino-acid chain: Enolase (433 aa).

Gln163 lines the (2R)-2-phosphoglycerate pocket. The active-site Proton donor is the Glu205. Asp242, Glu285, and Asp312 together coordinate Mg(2+). Lys337, Arg366, Ser367, and Lys388 together coordinate (2R)-2-phosphoglycerate. Lys337 functions as the Proton acceptor in the catalytic mechanism.

The protein belongs to the enolase family. Mg(2+) serves as cofactor.

The protein localises to the cytoplasm. Its subcellular location is the secreted. It is found in the cell surface. The catalysed reaction is (2R)-2-phosphoglycerate = phosphoenolpyruvate + H2O. The protein operates within carbohydrate degradation; glycolysis; pyruvate from D-glyceraldehyde 3-phosphate: step 4/5. Functionally, catalyzes the reversible conversion of 2-phosphoglycerate (2-PG) into phosphoenolpyruvate (PEP). It is essential for the degradation of carbohydrates via glycolysis. The chain is Enolase from Lawsonia intracellularis (strain PHE/MN1-00).